The sequence spans 632 residues: Chaperone protein DnaK (632 aa).

Phosphothreonine; by autocatalysis is present on Thr198. The interval 524–557 is disordered; sequence RREAVDAKNHADSLVHSTEKALAEHGSKIEDSER.

This sequence belongs to the heat shock protein 70 family.

Functionally, acts as a chaperone. In Nitrobacter hamburgensis (strain DSM 10229 / NCIMB 13809 / X14), this protein is Chaperone protein DnaK.